The sequence spans 633 residues: Probable potassium transport system protein Kup 2 (633 aa).

12 helical membrane-spanning segments follow: residues 18–38 (FLAL…TSPL), 61–81 (LVSL…VLFL), 107–127 (PVLM…DAMI), 143–163 (VAPA…LLLF), 173–193 (VSVF…AAGV), 211–231 (AIGF…AIFL), 255–275 (WFAV…ALVL), 287–307 (LMFP…ATII), 345–365 (IYLP…MLMF), 371–391 (LAPA…ILAF), 402–422 (ALTA…FLGA), and 427–447 (VHHG…MMWT).

The protein belongs to the HAK/KUP transporter (TC 2.A.72) family.

The protein localises to the cell inner membrane. It carries out the reaction K(+)(in) + H(+)(in) = K(+)(out) + H(+)(out). Functionally, transport of potassium into the cell. Likely operates as a K(+):H(+) symporter. In Rhizobium meliloti (strain 1021) (Ensifer meliloti), this protein is Probable potassium transport system protein Kup 2.